We begin with the raw amino-acid sequence, 878 residues long: Alanine--tRNA ligase (878 aa).

The Zn(2+) site is built by His568, His572, Cys670, and His674.

It belongs to the class-II aminoacyl-tRNA synthetase family. The cofactor is Zn(2+).

Its subcellular location is the cytoplasm. It catalyses the reaction tRNA(Ala) + L-alanine + ATP = L-alanyl-tRNA(Ala) + AMP + diphosphate. In terms of biological role, catalyzes the attachment of alanine to tRNA(Ala) in a two-step reaction: alanine is first activated by ATP to form Ala-AMP and then transferred to the acceptor end of tRNA(Ala). Also edits incorrectly charged Ser-tRNA(Ala) and Gly-tRNA(Ala) via its editing domain. In Latilactobacillus sakei subsp. sakei (strain 23K) (Lactobacillus sakei subsp. sakei), this protein is Alanine--tRNA ligase.